We begin with the raw amino-acid sequence, 334 residues long: Ornithine carbamoyltransferase (334 aa).

Carbamoyl phosphate-binding positions include 57–60 (STRT), glutamine 84, arginine 108, and 135–138 (HPTQ). Residues asparagine 169, aspartate 233, and 237-238 (SM) each bind L-ornithine. Carbamoyl phosphate-binding positions include 275–276 (CL) and arginine 320.

The protein belongs to the aspartate/ornithine carbamoyltransferase superfamily. OTCase family.

It localises to the cytoplasm. The enzyme catalyses carbamoyl phosphate + L-ornithine = L-citrulline + phosphate + H(+). Its pathway is amino-acid biosynthesis; L-arginine biosynthesis; L-arginine from L-ornithine and carbamoyl phosphate: step 1/3. Its function is as follows. Reversibly catalyzes the transfer of the carbamoyl group from carbamoyl phosphate (CP) to the N(epsilon) atom of ornithine (ORN) to produce L-citrulline. The protein is Ornithine carbamoyltransferase of Aeromonas hydrophila subsp. hydrophila (strain ATCC 7966 / DSM 30187 / BCRC 13018 / CCUG 14551 / JCM 1027 / KCTC 2358 / NCIMB 9240 / NCTC 8049).